A 422-amino-acid polypeptide reads, in one-letter code: Tyrosine--tRNA ligase (422 aa).

Residue Tyr-35 coordinates L-tyrosine. Residues 40–49 (PTADSLHIGH) carry the 'HIGH' region motif. L-tyrosine is bound by residues Tyr-170 and Gln-174. A 'KMSKS' region motif is present at residues 232–236 (KFGKT). Lys-235 contributes to the ATP binding site. The 67-residue stretch at 355–421 (LTLVDLLVES…GKKKYFLVTY (67 aa)) folds into the S4 RNA-binding domain.

This sequence belongs to the class-I aminoacyl-tRNA synthetase family. TyrS type 1 subfamily. Homodimer.

The protein localises to the cytoplasm. It carries out the reaction tRNA(Tyr) + L-tyrosine + ATP = L-tyrosyl-tRNA(Tyr) + AMP + diphosphate + H(+). In terms of biological role, catalyzes the attachment of tyrosine to tRNA(Tyr) in a two-step reaction: tyrosine is first activated by ATP to form Tyr-AMP and then transferred to the acceptor end of tRNA(Tyr). The sequence is that of Tyrosine--tRNA ligase from Bacillus pumilus (strain SAFR-032).